A 297-amino-acid chain; its full sequence is uncharacterized protein (297 aa).

WD repeat units follow at residues 12-51, 54-93, 96-135, 140-177, 179-217, 222-261, and 265-297; these read KAKE…CIHE, GHGH…VDRR, GHLA…FSPI, DAKD…LSSD, FSHP…ILKS, KNME…QITS, and VGTP…YQYN.

It belongs to the WD repeat MORG1 family.

It is found in the cytoplasm. It localises to the nucleus. This is an uncharacterized protein from Schizosaccharomyces pombe (strain 972 / ATCC 24843) (Fission yeast).